Reading from the N-terminus, the 131-residue chain is Small ribosomal subunit protein uS11 (131 aa).

It belongs to the universal ribosomal protein uS11 family. In terms of assembly, part of the 30S ribosomal subunit. Interacts with proteins S7 and S18. Binds to IF-3.

Its function is as follows. Located on the platform of the 30S subunit, it bridges several disparate RNA helices of the 16S rRNA. Forms part of the Shine-Dalgarno cleft in the 70S ribosome. This chain is Small ribosomal subunit protein uS11, found in Natranaerobius thermophilus (strain ATCC BAA-1301 / DSM 18059 / JW/NM-WN-LF).